Reading from the N-terminus, the 318-residue chain is Trans-prenyltransferase (318 aa).

A helical membrane pass occupies residues Met1–Thr21. Isopentenyl diphosphate contacts are provided by Lys85, Arg88, and His122. Asp129 and Asp135 together coordinate Mg(2+). Arg140 is a binding site for dimethylallyl diphosphate. Isopentenyl diphosphate is bound at residue Arg141. Dimethylallyl diphosphate-binding residues include Lys216, Thr217, and Gln254.

This sequence belongs to the FPP/GGPP synthase family. Asfivirus trans-prenyltransferase subfamily. It depends on Mg(2+) as a cofactor.

It is found in the host endoplasmic reticulum. Its subcellular location is the host membrane. It catalyses the reaction isopentenyl diphosphate + dimethylallyl diphosphate = (2E)-geranyl diphosphate + diphosphate. The enzyme catalyses isopentenyl diphosphate + (2E)-geranyl diphosphate = (2E,6E)-farnesyl diphosphate + diphosphate. It carries out the reaction isopentenyl diphosphate + (2E,6E)-farnesyl diphosphate = (2E,6E,10E)-geranylgeranyl diphosphate + diphosphate. The catalysed reaction is isopentenyl diphosphate + (2E,6E,10E)-geranylgeranyl diphosphate = (2E,6E,10E,14E)-geranylfarnesyl diphosphate + diphosphate. It participates in isoprenoid biosynthesis; farnesyl diphosphate biosynthesis; farnesyl diphosphate from geranyl diphosphate and isopentenyl diphosphate: step 1/1. Its pathway is isoprenoid biosynthesis; geranyl diphosphate biosynthesis; geranyl diphosphate from dimethylallyl diphosphate and isopentenyl diphosphate: step 1/1. The protein operates within isoprenoid biosynthesis; geranylgeranyl diphosphate biosynthesis; geranylgeranyl diphosphate from farnesyl diphosphate and isopentenyl diphosphate: step 1/1. Functionally, trans-prenyltransferase that catalyzes the sequential condensation of isopentenyl diphosphate (IPP) with different allylic diphosphates, such as dimethylallyl diphosphate (DMAPP), geranyl diphosphate (GPP), farnesyl diphosphate (FPP) and geranylgeranyl diphosphate (GGPP), farnesyl diphosphate being the best allylic substrate. The polypeptide is Trans-prenyltransferase (Ornithodoros (relapsing fever ticks)).